Consider the following 202-residue polypeptide: Small ribosomal subunit protein uS4c (202 aa).

The region spanning 90-158 is the S4 RNA-binding domain; it reads MRSDNVIFRL…ISKNIELYQK (69 aa).

It belongs to the universal ribosomal protein uS4 family. In terms of assembly, part of the 30S ribosomal subunit. Contacts protein S5. The interaction surface between S4 and S5 is involved in control of translational fidelity.

It is found in the plastid. The protein resides in the chloroplast. One of the primary rRNA binding proteins, it binds directly to 16S rRNA where it nucleates assembly of the body of the 30S subunit. Its function is as follows. With S5 and S12 plays an important role in translational accuracy. This chain is Small ribosomal subunit protein uS4c (rps4), found in Exsertotheca crispa (Moss).